Reading from the N-terminus, the 213-residue chain is ATP phosphoribosyltransferase (213 aa).

The protein belongs to the ATP phosphoribosyltransferase family. Short subfamily. Heteromultimer composed of HisG and HisZ subunits.

The protein localises to the cytoplasm. It carries out the reaction 1-(5-phospho-beta-D-ribosyl)-ATP + diphosphate = 5-phospho-alpha-D-ribose 1-diphosphate + ATP. It functions in the pathway amino-acid biosynthesis; L-histidine biosynthesis; L-histidine from 5-phospho-alpha-D-ribose 1-diphosphate: step 1/9. Catalyzes the condensation of ATP and 5-phosphoribose 1-diphosphate to form N'-(5'-phosphoribosyl)-ATP (PR-ATP). Has a crucial role in the pathway because the rate of histidine biosynthesis seems to be controlled primarily by regulation of HisG enzymatic activity. The protein is ATP phosphoribosyltransferase of Listeria monocytogenes serotype 4a (strain HCC23).